The sequence spans 603 residues: NADH-ubiquinone oxidoreductase chain 5 (603 aa).

Transmembrane regions (helical) follow at residues 4 to 24 (YTSI…ATLV), 36 to 56 (VKTT…LYIF), 87 to 107 (MMFI…SLWY), 122 to 142 (LIFL…QLFI), 171 to 191 (AVLY…WFLL), 211 to 233 (LPLM…HPWL), 241 to 261 (TPVS…FLLI), 272 to 292 (LTQN…AMCA), 301 to 320 (IVAF…IGIN), 325 to 347 (AFLH…GSII), 370 to 390 (STSL…TGFY), 406 to 422 (AWAL…TSAY), 488 to 508 (LLAL…TLMT), and 583 to 603 (MIKL…LLMV).

This sequence belongs to the complex I subunit 5 family. As to quaternary structure, core subunit of respiratory chain NADH dehydrogenase (Complex I) which is composed of 45 different subunits.

It localises to the mitochondrion inner membrane. It carries out the reaction a ubiquinone + NADH + 5 H(+)(in) = a ubiquinol + NAD(+) + 4 H(+)(out). Its function is as follows. Core subunit of the mitochondrial membrane respiratory chain NADH dehydrogenase (Complex I) which catalyzes electron transfer from NADH through the respiratory chain, using ubiquinone as an electron acceptor. Essential for the catalytic activity and assembly of complex I. The sequence is that of NADH-ubiquinone oxidoreductase chain 5 (MT-ND5) from Papio hamadryas (Hamadryas baboon).